A 215-amino-acid polypeptide reads, in one-letter code: Small ribosomal subunit protein uS3c (215 aa).

The 74-residue stretch at 43 to 116 (IKNYIKKNMK…KLNMAITRIA (74 aa)) folds into the KH type-2 domain.

The protein belongs to the universal ribosomal protein uS3 family. In terms of assembly, part of the 30S ribosomal subunit.

The protein resides in the plastid. It is found in the chloroplast. This is Small ribosomal subunit protein uS3c (rps3) from Morus indica (Mulberry).